The following is a 583-amino-acid chain: MHYCNNGNISNWKVFRRLWPIINPFKIGLIIASITLIINAVSDSLMLALLKPLLDEGFGKANRSIFMWMPLVLMGLMIMRGMSGFASTYCISWVSGKVVMHIRRLLFNHIMNMPVSFFIEQSTATLMSRITYDADQVASSSSGALITIIREGASVVGLCIMMFYYSWQLSLVLILIMPIISIIIKLVSNKFKDIGKKIQNSMSQLVNSVEQMLKGHKEVLIFGGQHLEQNRFNYLSNRMRQYTMKMVQTSSVFEPLIQFVASLALACVLYIASIPSVIEMLSAGTITVIFSSMIALMKPLKSLTNVSAQFQRGMVACQTLFTILDLKTEKNIGKFSVKRVKGHIIFDNVTFFYPETNTPSLCNINFNIESGKTIALVGRSGSGKSTIVNLLTRFYDVYQGRILLDGLNLNDYTLTSLREQVSVVTQNVYLFNDTIANNIAYARTRFYSRASIEEAAKMAYAMGFISKMKNGFDTIVGENGILLSNGQRQRIAIARALLRNCPILILDEATSSLDTESECIIYKSINILKKNRTSLIIAHRLSTIENADEILVVERGSIVERGIHVDLLNHKGVYSQLYKFQFS.

Transmembrane regions (helical) follow at residues 18-38 (LWPI…TLII), 65-85 (IFMW…MSGF), 105-127 (LLFN…ATLM), 143-163 (GALI…IMMF), 167-187 (WQLS…IKLV), 252-272 (VFEP…LYIA), and 277-297 (VIEM…IALM). One can recognise an ABC transmembrane type-1 domain in the interval 30 to 312 (IIASITLIIN…LTNVSAQFQR (283 aa)). The 237-residue stretch at 344–580 (IIFDNVTFFY…KGVYSQLYKF (237 aa)) folds into the ABC transporter domain. 378-385 (GRSGSGKS) contacts ATP.

Belongs to the ABC transporter superfamily. Lipid exporter (TC 3.A.1.106) family. As to quaternary structure, homodimer.

Its subcellular location is the cell inner membrane. The catalysed reaction is ATP + H2O + lipid A-core oligosaccharideSide 1 = ADP + phosphate + lipid A-core oligosaccharideSide 2.. Functionally, involved in lipopolysaccharide (LPS) biosynthesis. Translocates lipid A-core from the inner to the outer leaflet of the inner membrane. Transmembrane domains (TMD) form a pore in the inner membrane and the ATP-binding domain (NBD) is responsible for energy generation. In Blochmanniella floridana, this protein is ATP-dependent lipid A-core flippase.